The chain runs to 545 residues: Chaperonin GroEL (545 aa).

ATP-binding positions include 29 to 32, lysine 50, 86 to 90, glycine 415, and aspartate 495; these read TLGP and DGTTT.

This sequence belongs to the chaperonin (HSP60) family. As to quaternary structure, forms a cylinder of 14 subunits composed of two heptameric rings stacked back-to-back. Interacts with the co-chaperonin GroES.

The protein localises to the cytoplasm. The enzyme catalyses ATP + H2O + a folded polypeptide = ADP + phosphate + an unfolded polypeptide.. Together with its co-chaperonin GroES, plays an essential role in assisting protein folding. The GroEL-GroES system forms a nano-cage that allows encapsulation of the non-native substrate proteins and provides a physical environment optimized to promote and accelerate protein folding. The protein is Chaperonin GroEL of Porphyromonas gingivalis (strain ATCC 33277 / DSM 20709 / CIP 103683 / JCM 12257 / NCTC 11834 / 2561).